The sequence spans 759 residues: 1,4-alpha-glucan branching enzyme GlgB (759 aa).

The segment at 1–21 (MAKTKGLPKDTAVTPSPHLRP) is disordered. The active-site Nucleophile is the Asp422. The active-site Proton donor is Glu475.

The protein belongs to the glycosyl hydrolase 13 family. GlgB subfamily. In terms of assembly, monomer.

It catalyses the reaction Transfers a segment of a (1-&gt;4)-alpha-D-glucan chain to a primary hydroxy group in a similar glucan chain.. The protein operates within glycan biosynthesis; glycogen biosynthesis. Its function is as follows. Catalyzes the formation of the alpha-1,6-glucosidic linkages in glycogen by scission of a 1,4-alpha-linked oligosaccharide from growing alpha-1,4-glucan chains and the subsequent attachment of the oligosaccharide to the alpha-1,6 position. The sequence is that of 1,4-alpha-glucan branching enzyme GlgB from Mycobacterium sp. (strain JLS).